The following is a 576-amino-acid chain: MGVVENRKILPEKKLGGWRAITFILGNETLEKLGSIGVSANFMLYLRNVFHMEPVEAFNVYYLWMGLTNFAPLLGALISDAYIGRFKTIAYASLFSILGLMTVTLTACLPQLHPPPCNNPHPDECDDPNKLQLGILFLGLGFLSIGSGGIRPCSIPFGVDQFDQRTEQGLKGVASFFNWYYLTLTMVLIFSHTVVVYLQTVSWVIGFSIPTSLMACAVVLFFVGMRFYVYVKPEGSVFSGIARVIVAARKKRDLKISLVDDGTEEYYEPPVKPGVLSKLPLTDQFKFLDKAAVILDGDLTSEGVPANKWRLCSIQEVEEVKCLIRVVPVWSAGIISIVAMTTQATFMVFQATKMDRHMGPHFEIPAASITVISYITIGIWVPIYEHLLVPFLWRMRKFRVTLLQRMGIGIVFAILSMFTAGFVEGVRRTRATEMTQMSVFWLALPLILMGLCESFNFIGLIEFFNSQFPEHMRSIANSLFPLSFAAANYLSSLLVTTVHKVSGTKDHPDWLNKDLDRGKLDYFYYLIAVLGVVNLVYFWYCAHRYQYKAGSQIEDFNEEKSLLDIEPNQRHDQSPS.

A run of 11 helical transmembrane segments spans residues 58 to 78 (FNVYYLWMGLTNFAPLLGALI), 89 to 109 (IAYASLFSILGLMTVTLTACL), 130 to 150 (KLQLGILFLGLGFLSIGSGGI), 176 to 196 (FFNWYYLTLTMVLIFSHTVVV), 203 to 223 (WVIGFSIPTSLMACAVVLFFV), 329 to 349 (VWSAGIISIVAMTTQATFMVF), 364 to 384 (IPAASITVISYITIGIWVPIY), 406 to 426 (MGIGIVFAILSMFTAGFVEGV), 441 to 461 (WLALPLILMGLCESFNFIGLI), 475 to 495 (IANSLFPLSFAAANYLSSLLV), and 522 to 542 (YFYYLIAVLGVVNLVYFWYCA).

Belongs to the major facilitator superfamily. Proton-dependent oligopeptide transporter (POT/PTR) (TC 2.A.17) family. Expressed in flowers and siliques. Expressed in vascular bundle of the siliques and in funiculus.

Its subcellular location is the cell membrane. Low-affinity proton-dependent nitrate transporter. Not involved in dipeptides transport. Involved in delivering nitrate for seed development. The chain is Protein NRT1/ PTR FAMILY 2.12 (NPF2.12) from Arabidopsis thaliana (Mouse-ear cress).